The primary structure comprises 335 residues: tRNA N6-adenosine threonylcarbamoyltransferase (335 aa).

Fe cation is bound by residues histidine 111 and histidine 115. Substrate-binding positions include leucine 133 to glycine 137, aspartate 166, glycine 179, and asparagine 276. Aspartate 301 is a binding site for Fe cation.

It belongs to the KAE1 / TsaD family. Requires Fe(2+) as cofactor.

The protein localises to the cytoplasm. It carries out the reaction L-threonylcarbamoyladenylate + adenosine(37) in tRNA = N(6)-L-threonylcarbamoyladenosine(37) in tRNA + AMP + H(+). Required for the formation of a threonylcarbamoyl group on adenosine at position 37 (t(6)A37) in tRNAs that read codons beginning with adenine. Is involved in the transfer of the threonylcarbamoyl moiety of threonylcarbamoyl-AMP (TC-AMP) to the N6 group of A37, together with TsaE and TsaB. TsaD likely plays a direct catalytic role in this reaction. This chain is tRNA N6-adenosine threonylcarbamoyltransferase, found in Wolbachia sp. subsp. Drosophila simulans (strain wRi).